The primary structure comprises 188 residues: CASP-like protein 4B1 (188 aa).

The interval 1–34 is disordered; sequence MTNPDNMKPVEATDVESAAEKTSEPTPASGTSTI. Topologically, residues 1–46 are cytoplasmic; sequence MTNPDNMKPVEATDVESAAEKTSEPTPASGTSTITQRWKREDLIKK. Residues 24-34 show a composition bias toward polar residues; it reads EPTPASGTSTI. A helical transmembrane segment spans residues 47–67; the sequence is ASPITRGICLLFSLIAFLIMV. The Extracellular portion of the chain corresponds to 68-84; the sequence is SNKHGYGRNFNDYEEYR. The chain crosses the membrane as a helical span at residues 85–105; the sequence is YVLAISIISTLYTAWQTFAHF. Residues 106–124 are Cytoplasmic-facing; the sequence is SKREIFDRRTSILVDFSGD. The helical transmembrane segment at 125–145 threads the bilayer; sequence QIVAYLLISAASSAIPLTNIF. Residues 146-156 lie on the Extracellular side of the membrane; it reads REGQDNIFTDS. The helical transmembrane segment at 157-177 threads the bilayer; the sequence is AASAISMAIFAFIALALSALF. Topologically, residues 178-188 are cytoplasmic; sequence SGYKLSTHSFI.

It belongs to the Casparian strip membrane proteins (CASP) family. Homodimer and heterodimers.

The protein localises to the cell membrane. This is CASP-like protein 4B1 from Arabidopsis thaliana (Mouse-ear cress).